We begin with the raw amino-acid sequence, 20 residues long: Unknown protein NF019 from 2D-PAGE (20 aa).

The sequence is that of Unknown protein NF019 from 2D-PAGE from Naegleria fowleri (Brain eating amoeba).